A 130-amino-acid polypeptide reads, in one-letter code: Peptide methionine sulfoxide reductase MsrB (130 aa).

Residues 8–130 (LEEWRSMLDP…NSVCLDLVPR (123 aa)) form the MsrB domain. Zn(2+) contacts are provided by C47, C50, C96, and C99. Catalysis depends on C119, which acts as the Nucleophile.

Belongs to the MsrB Met sulfoxide reductase family. The cofactor is Zn(2+).

It carries out the reaction L-methionyl-[protein] + [thioredoxin]-disulfide + H2O = L-methionyl-(R)-S-oxide-[protein] + [thioredoxin]-dithiol. This chain is Peptide methionine sulfoxide reductase MsrB, found in Pseudomonas fluorescens (strain ATCC BAA-477 / NRRL B-23932 / Pf-5).